The chain runs to 198 residues: Peptide deformylase (198 aa).

The Fe cation site is built by Cys123 and His167. The active site involves Glu168. Residue His171 participates in Fe cation binding.

Belongs to the polypeptide deformylase family. Fe(2+) serves as cofactor.

It catalyses the reaction N-terminal N-formyl-L-methionyl-[peptide] + H2O = N-terminal L-methionyl-[peptide] + formate. Its function is as follows. Removes the formyl group from the N-terminal Met of newly synthesized proteins. Requires at least a dipeptide for an efficient rate of reaction. N-terminal L-methionine is a prerequisite for activity but the enzyme has broad specificity at other positions. This chain is Peptide deformylase, found in Ureaplasma parvum serovar 3 (strain ATCC 27815 / 27 / NCTC 11736).